A 206-amino-acid chain; its full sequence is Protein-methionine-sulfoxide reductase heme-binding subunit MsrQ (206 aa).

6 helical membrane passes run 10-30, 42-62, 75-95, 110-130, 147-167, and 169-189; these read VFIA…SAVL, LGLG…LQKL, LGLW…VFVL, PYII…VTSN, LVYV…RADL, and EWAI…PPVM.

The protein belongs to the MsrQ family. In terms of assembly, heterodimer of a catalytic subunit (MsrP) and a heme-binding subunit (MsrQ). It depends on FMN as a cofactor. The cofactor is heme b.

It localises to the cell inner membrane. Part of the MsrPQ system that repairs oxidized periplasmic proteins containing methionine sulfoxide residues (Met-O), using respiratory chain electrons. Thus protects these proteins from oxidative-stress damage caused by reactive species of oxygen and chlorine generated by the host defense mechanisms. MsrPQ is essential for the maintenance of envelope integrity under bleach stress, rescuing a wide series of structurally unrelated periplasmic proteins from methionine oxidation. MsrQ provides electrons for reduction to the reductase catalytic subunit MsrP, using the quinone pool of the respiratory chain. The chain is Protein-methionine-sulfoxide reductase heme-binding subunit MsrQ from Pseudomonas fluorescens (strain SBW25).